Here is an 855-residue protein sequence, read N- to C-terminus: MEPHSQEPDLKPIYHRLLSPLSLFPSKAKPPPEPPKRPSQDATPLQSIPLAKLKVGPLCRQVSKRLASSGRAARVTAKDRLRLTEVILEELKCNWREPPIEPILDYENNQKLRQRLESYVLISSEQLFVRYLHLLVTLPTSRRVFTESATLSRLAVNLARDCTVFLTSPDVYRCLLADFQTLLNLKHAQGGIVKLRPPPCPPGTFKLCPIPWPHSTGLDHMPCSSLNLNYLVQLSRPYDFPSEPEPDPVEELKSIPQLKSRQQLLWVPSMIKDKEIESRPSPMVPLPSHSPSSESHQFPTSPVHSWLQRGQSMPCLHEGWSLADELCLLPPSPHPLTPLILASESKPLPFRDIVAEDLKQKMKIMRMEWSRYSLLDSGLPPLLGVLTRRLTAQHHLEKLQQMIKSLQEEEASGKWDLQPPRIIPLHPQPVTVALKVHDQVIVQVATVQLSERYFNDSFHVEGAGVLYNHLTGELDGKAIEEMDADRLVGNTTGEVYKELMSRVSVSHLSFEEGDQIEPSADKDWSSYLASSFLHQDKHMPIINRNLVGFYSRRTSTPKPVPEKVPSLTLLPRHKSWDKRPNRHGVWMNWLKPSVSSEDYFKYLSFQESDFLHVIFQMYEKEAPVEVPVPVQEYLDIQQPPPLLQDEELEFMQGKWDWSSVIEDGSGPGRAYIHNLQQRLKRLWVMLEVPEQNRLDMVIKYSSNARLQQLPALIKAWEQVLKPIQKRESLLGRLEWFEQQASDPNRFFQKPDLLMNRLLEENRFRSYLQRKLNRMESNLVSLLERIESVFGEPVTFKGRSYLKKMKQDKVEMLYWLQQQRRIRNLTQAQKTFRQSCTFTGSSSQALVAPGNTPTTH.

Disordered stretches follow at residues 23-43 (LFPS…QDAT) and 278-302 (SRPS…PTSP). Positions 287–296 (PSHSPSSESH) are enriched in low complexity. Coiled coils occupy residues 387-413 (TRRL…EASG) and 764-789 (RSYL…ESVF).

The protein belongs to the CCDC87 family. Specifically expressed in testis (at protein level). Not detected in other tissues tested (at protein level). In the testis, localizes to pachytene spermatocytes and spermatids.

Plays a role in spermatogenesis, where it is important for normal sperm head morphology. Also required for the acrosome reaction and thus normal male fertility. The protein is Coiled-coil domain-containing protein 87 (Ccdc87) of Mus musculus (Mouse).